The sequence spans 158 residues: Copper transporter 2 (158 aa).

The interval 1–20 (MDHDHMHDMPPPSPSSSSMS) is disordered. 2 helical membrane passes run 53-73 (GMYA…EWLA) and 104-124 (YLVM…AIAG).

The protein belongs to the copper transporter (Ctr) (TC 1.A.56) family. SLC31A subfamily. As to expression, highly expressed in leaves and at lower levels in roots, stems and flowers.

The protein localises to the membrane. In terms of biological role, involved in the transport of copper. In Arabidopsis thaliana (Mouse-ear cress), this protein is Copper transporter 2 (COPT2).